Here is a 122-residue protein sequence, read N- to C-terminus: uncharacterized protein (122 aa).

The protein to B.subtilis YpdA.

This is an uncharacterized protein from Bacillus licheniformis.